An 86-amino-acid chain; its full sequence is Small ribosomal subunit protein uS15 (86 aa).

Over residues 1-10 (MSIDTQSIIE) the composition is skewed to polar residues. A disordered region spans residues 1-21 (MSIDTQSIIENNKRSAHDTGS).

The protein belongs to the universal ribosomal protein uS15 family. Part of the 30S ribosomal subunit. Forms a bridge to the 50S subunit in the 70S ribosome, contacting the 23S rRNA.

In terms of biological role, one of the primary rRNA binding proteins, it binds directly to 16S rRNA where it helps nucleate assembly of the platform of the 30S subunit by binding and bridging several RNA helices of the 16S rRNA. Forms an intersubunit bridge (bridge B4) with the 23S rRNA of the 50S subunit in the ribosome. The sequence is that of Small ribosomal subunit protein uS15 from Xylella fastidiosa (strain M23).